The chain runs to 105 residues: Large ribosomal subunit protein uL24 (105 aa).

This sequence belongs to the universal ribosomal protein uL24 family. In terms of assembly, part of the 50S ribosomal subunit.

In terms of biological role, one of two assembly initiator proteins, it binds directly to the 5'-end of the 23S rRNA, where it nucleates assembly of the 50S subunit. One of the proteins that surrounds the polypeptide exit tunnel on the outside of the subunit. This is Large ribosomal subunit protein uL24 from Thermotoga petrophila (strain ATCC BAA-488 / DSM 13995 / JCM 10881 / RKU-1).